Here is a 158-residue protein sequence, read N- to C-terminus: Transcription elongation factor GreA (158 aa).

Residues 49–73 (QAAREQQGFIEGRIKEIEAKLANAQ) adopt a coiled-coil conformation.

The protein belongs to the GreA/GreB family.

Its function is as follows. Necessary for efficient RNA polymerase transcription elongation past template-encoded arresting sites. The arresting sites in DNA have the property of trapping a certain fraction of elongating RNA polymerases that pass through, resulting in locked ternary complexes. Cleavage of the nascent transcript by cleavage factors such as GreA or GreB allows the resumption of elongation from the new 3'terminus. GreA releases sequences of 2 to 3 nucleotides. The chain is Transcription elongation factor GreA from Methylococcus capsulatus (strain ATCC 33009 / NCIMB 11132 / Bath).